A 247-amino-acid chain; its full sequence is UDP-2,3-diacylglucosamine hydrolase (247 aa).

D8, H10, D41, N79, and H114 together coordinate Mn(2+). A substrate-binding site is contributed by 79–80; the sequence is NR. Substrate is bound by residues D122, S160, D171, N174, and H202. Residues H202 and H204 each contribute to the Mn(2+) site.

The protein belongs to the LpxH family. Requires Mn(2+) as cofactor.

The protein resides in the cell inner membrane. It catalyses the reaction UDP-2-N,3-O-bis[(3R)-3-hydroxytetradecanoyl]-alpha-D-glucosamine + H2O = 2-N,3-O-bis[(3R)-3-hydroxytetradecanoyl]-alpha-D-glucosaminyl 1-phosphate + UMP + 2 H(+). The protein operates within glycolipid biosynthesis; lipid IV(A) biosynthesis; lipid IV(A) from (3R)-3-hydroxytetradecanoyl-[acyl-carrier-protein] and UDP-N-acetyl-alpha-D-glucosamine: step 4/6. Its function is as follows. Hydrolyzes the pyrophosphate bond of UDP-2,3-diacylglucosamine to yield 2,3-diacylglucosamine 1-phosphate (lipid X) and UMP by catalyzing the attack of water at the alpha-P atom. Involved in the biosynthesis of lipid A, a phosphorylated glycolipid that anchors the lipopolysaccharide to the outer membrane of the cell. This Xanthomonas oryzae pv. oryzae (strain MAFF 311018) protein is UDP-2,3-diacylglucosamine hydrolase.